Consider the following 397-residue polypeptide: Argininosuccinate synthase (397 aa).

Position 7 to 15 (7 to 15) interacts with ATP; the sequence is AFSGGLDTT. Position 84 (Tyr84) interacts with L-citrulline. Gly114 is an ATP binding site. 3 residues coordinate L-aspartate: Thr116, Asn120, and Asp121. Residue Asn120 coordinates L-citrulline. Positions 124, 170, 179, 254, and 266 each coordinate L-citrulline.

This sequence belongs to the argininosuccinate synthase family. Type 1 subfamily. Homotetramer.

It localises to the cytoplasm. It carries out the reaction L-citrulline + L-aspartate + ATP = 2-(N(omega)-L-arginino)succinate + AMP + diphosphate + H(+). The protein operates within amino-acid biosynthesis; L-arginine biosynthesis; L-arginine from L-ornithine and carbamoyl phosphate: step 2/3. This chain is Argininosuccinate synthase, found in Haloquadratum walsbyi (strain DSM 16790 / HBSQ001).